The primary structure comprises 85 residues: ATP synthase subunit c (85 aa).

2 consecutive transmembrane segments (helical) span residues 10–30 and 53–73; these read IAVG…FALL and FIIA…ALLF.

This sequence belongs to the ATPase C chain family. In terms of assembly, F-type ATPases have 2 components, F(1) - the catalytic core - and F(0) - the membrane proton channel. F(1) has five subunits: alpha(3), beta(3), gamma(1), delta(1), epsilon(1). F(0) has three main subunits: a(1), b(2) and c(10-14). The alpha and beta chains form an alternating ring which encloses part of the gamma chain. F(1) is attached to F(0) by a central stalk formed by the gamma and epsilon chains, while a peripheral stalk is formed by the delta and b chains.

The protein resides in the cell inner membrane. Its function is as follows. F(1)F(0) ATP synthase produces ATP from ADP in the presence of a proton or sodium gradient. F-type ATPases consist of two structural domains, F(1) containing the extramembraneous catalytic core and F(0) containing the membrane proton channel, linked together by a central stalk and a peripheral stalk. During catalysis, ATP synthesis in the catalytic domain of F(1) is coupled via a rotary mechanism of the central stalk subunits to proton translocation. In terms of biological role, key component of the F(0) channel; it plays a direct role in translocation across the membrane. A homomeric c-ring of between 10-14 subunits forms the central stalk rotor element with the F(1) delta and epsilon subunits. The polypeptide is ATP synthase subunit c (Aliivibrio fischeri (strain ATCC 700601 / ES114) (Vibrio fischeri)).